The following is a 21-amino-acid chain: Sarafotoxin-D (21 aa).

2 disulfide bridges follow: C1–C15 and C3–C11.

It belongs to the endothelin/sarafotoxin family. As to expression, expressed by the venom gland.

The protein localises to the secreted. Vasoconstrictor activity. These toxins cause cardiac arrest probably as a result of coronary vasospasm. May act by displaying agonistic activities towards endothelin-1 and -2 receptors (EDNRA and EDNRB). This is Sarafotoxin-D from Atractaspis engaddensis (Israeli burrowing asp).